The sequence spans 748 residues: Spidroin-1 (748 aa).

25 repeat units span residues 1-25 (QGAG…GGQG), 26-38 (AGQG…GGQG), 39-66 (AGQG…GSQG), 67-96 (AGRG…GSQG), 97-130 (AGRG…GNQG), 131-158 (AGRG…GSQG), 159-191 (AGRG…GGQG), 192-204 (AGQG…GSQG), 205-235 (AGRG…GGQG), 236-262 (AGQG…GSQG), 263-292 (AGRG…GGQG), 293-305 (AGQG…GSQG), 306-333 (AGRG…GGQG), 334-360 (AGQG…GSQG), 361-394 (AGRG…GSQG), 395-424 (AGRG…GNQG), 425-458 (AGRG…GNQG), 459-485 (AGRG…GSQG), 486-512 (AGRG…RGQG), 513-525 (AGQG…GSQG), 526-555 (SGRG…GGQG), 556-582 (AGQG…GSQG), 583-612 (AGRG…GGQG), 613-642 (VGRG…VGSG), and 643-655 (ASAA…RLSS). The segment at 1 to 655 (QGAGAAAAAA…ASAAASRLSS (655 aa)) is 25 X approximate tandem repeats.

Belongs to the silk fibroin family. Major subunit, with spidroin 2, of the dragline silk.

It is found in the secreted. Its subcellular location is the extracellular space. In terms of biological role, spiders' major ampullate silk possesses unique characteristics of strength and elasticity. Fibroin consists of pseudocrystalline regions of antiparallel beta-sheet interspersed with elastic amorphous segments. The sequence is that of Spidroin-1 from Trichonephila clavipes (Golden silk orbweaver).